Consider the following 667-residue polypeptide: NADPH--cytochrome P450 reductase (667 aa).

The Lumenal segment spans residues 1–8 (MEILESID). Residues 9 to 29 (FIEVLILDNLGAIIIVAVIVG) traverse the membrane as a helical segment. Residues 30–667 (TYLYMNKPPP…HGRYLQDVWF (638 aa)) lie on the Cytoplasmic side of the membrane. Positions 72 to 215 (MKIFFGTQTR…DFNRWKKDMW (144 aa)) constitute a Flavodoxin-like domain. Residues 164–173 (LGNKTYEHYN) and Asp-199 contribute to the FMN site. The FAD-binding FR-type domain occupies 277 to 511 (KNPYYAEVLE…FVRESHFKLP (235 aa)). NADP(+) is bound at residue Arg-297. FAD is bound by residues 468-470 (TSV) and 484-487 (GVAS). NADP(+) is bound by residues Thr-527, 586–587 (SR), and 592–596 (KVYVQ). Trp-666 contributes to the FAD binding site.

It belongs to the NADPH--cytochrome P450 reductase family. In the N-terminal section; belongs to the flavodoxin family. The protein in the C-terminal section; belongs to the flavoprotein pyridine nucleotide cytochrome reductase family. FAD serves as cofactor. FMN is required as a cofactor.

It is found in the endoplasmic reticulum membrane. It catalyses the reaction 2 oxidized [cytochrome P450] + NADPH = 2 reduced [cytochrome P450] + NADP(+) + H(+). Functionally, this enzyme is required for electron transfer from NADP to cytochrome P450 in microsomes. It can also provide electron transfer to heme oxygenase and cytochrome B5. The protein is NADPH--cytochrome P450 reductase (redB) of Dictyostelium discoideum (Social amoeba).